Reading from the N-terminus, the 177-residue chain is Adenine phosphoribosyltransferase (177 aa).

This sequence belongs to the purine/pyrimidine phosphoribosyltransferase family. In terms of assembly, homodimer.

Its subcellular location is the cytoplasm. It carries out the reaction AMP + diphosphate = 5-phospho-alpha-D-ribose 1-diphosphate + adenine. Its pathway is purine metabolism; AMP biosynthesis via salvage pathway; AMP from adenine: step 1/1. Its function is as follows. Catalyzes a salvage reaction resulting in the formation of AMP, that is energically less costly than de novo synthesis. The sequence is that of Adenine phosphoribosyltransferase from Leptospira interrogans serogroup Icterohaemorrhagiae serovar copenhageni (strain Fiocruz L1-130).